The sequence spans 450 residues: Tubulin alpha chain (450 aa).

The short motif at 1–4 (MREC) is the MREC motif element. Residue glutamine 11 coordinates GTP. Lysine 40 carries the N6-acetyllysine modification. Residues glutamate 71, serine 140, glycine 144, threonine 145, threonine 179, asparagine 206, and asparagine 228 each contribute to the GTP site. Residue glutamate 71 participates in Mg(2+) binding. The active site involves glutamate 254. Glutamate 444 carries the post-translational modification 5-glutamyl polyglutamate.

This sequence belongs to the tubulin family. Dimer of alpha and beta chains. A typical microtubule is a hollow water-filled tube with an outer diameter of 25 nm and an inner diameter of 15 nM. Alpha-beta heterodimers associate head-to-tail to form protofilaments running lengthwise along the microtubule wall with the beta-tubulin subunit facing the microtubule plus end conferring a structural polarity. Microtubules usually have 13 protofilaments but different protofilament numbers can be found in some organisms and specialized cells. It depends on Mg(2+) as a cofactor. Some glutamate residues at the C-terminus are polyglycylated, resulting in polyglycine chains on the gamma-carboxyl group. Glycylation is mainly limited to tubulin incorporated into axonemes (cilia and flagella) whereas glutamylation is prevalent in neuronal cells, centrioles, axonemes, and the mitotic spindle. Both modifications can coexist on the same protein on adjacent residues, and lowering polyglycylation levels increases polyglutamylation, and reciprocally. The precise function of polyglycylation is still unclear. In terms of processing, some glutamate residues at the C-terminus are polyglutamylated, resulting in polyglutamate chains on the gamma-carboxyl group. Polyglutamylation plays a key role in microtubule severing by spastin (SPAST). SPAST preferentially recognizes and acts on microtubules decorated with short polyglutamate tails: severing activity by SPAST increases as the number of glutamates per tubulin rises from one to eight, but decreases beyond this glutamylation threshold. Post-translationally, acetylation of alpha chains at Lys-40 is located inside the microtubule lumen. This modification has been correlated with increased microtubule stability, intracellular transport and ciliary assembly. Undergoes a tyrosination/detyrosination cycle, the cyclic removal and re-addition of a C-terminal tyrosine residue by the enzymes tubulin tyrosine carboxypeptidase (MATCAP, VASH1 or VASH2) and tubulin tyrosine ligase (TTL), respectively. In terms of processing, tyrosination promotes microtubule interaction with CAP-Gly microtubule plus-end tracking proteins. Tyrosinated tubulins regulate the initiation of dynein-driven motility. Post-translationally, detyrosination is involved in metaphase plate congression by guiding chromosomes during mitosis. Detyrosination increases microtubules-dependent mechanotransduction in dystrophic cardiac and skeletal muscle. In cardiomyocytes, detyrosinated microtubules are required to resist to contractile compression during contraction.

It is found in the cytoplasm. Its subcellular location is the cytoskeleton. It catalyses the reaction GTP + H2O = GDP + phosphate + H(+). In terms of biological role, tubulin is the major constituent of microtubules, a cylinder consisting of laterally associated linear protofilaments composed of alpha- and beta-tubulin heterodimers. Microtubules grow by the addition of GTP-tubulin dimers to the microtubule end, where a stabilizing cap forms. Below the cap, tubulin dimers are in GDP-bound state, owing to GTPase activity of alpha-tubulin. The chain is Tubulin alpha chain from Notophthalmus viridescens (Eastern newt).